A 245-amino-acid polypeptide reads, in one-letter code: Ribonuclease 3 (245 aa).

The RNase III domain occupies 19-148; that stretch reads FKLFQEKIGI…FIGALYLDQG (130 aa). A Mg(2+)-binding site is contributed by Glu-61. The active site involves Asp-65. Mg(2+) is bound by residues Asp-134 and Glu-137. The active site involves Glu-137. In terms of domain architecture, DRBM spans 174-243; that stretch reads DYKSQLQELI…AAEALKKLKE (70 aa).

This sequence belongs to the ribonuclease III family. In terms of assembly, homodimer. Requires Mg(2+) as cofactor.

It localises to the cytoplasm. The catalysed reaction is Endonucleolytic cleavage to 5'-phosphomonoester.. In terms of biological role, digests double-stranded RNA. Involved in the processing of primary rRNA transcript to yield the immediate precursors to the large and small rRNAs (23S and 16S). Processes some mRNAs, and tRNAs when they are encoded in the rRNA operon. Processes pre-crRNA and tracrRNA of type II CRISPR loci if present in the organism. The chain is Ribonuclease 3 from Bacillus cereus (strain 03BB102).